A 413-amino-acid chain; its full sequence is Palmitoyl-acyl carrier protein thioesterase, chloroplastic (413 aa).

A chloroplast-targeting transit peptide spans 1 to 57; sequence MVATAVTSAFFPVTSSPDSSDSKNKKLGSIKSKPSVSSGSLQVKANAQAPPKINGTV. The tract at residues 12-79 is disordered; sequence PVTSSPDSSD…DGASSPPPRT (68 aa). Residues 29–40 show a composition bias toward low complexity; sequence SIKSKPSVSSGS. Active-site residues include N310, H312, and C347. A disordered region spans residues 394–413; the sequence is WRPKHAKSSANMDQITAKRA.

The protein belongs to the acyl-ACP thioesterase family.

It is found in the plastid. It localises to the chloroplast. It carries out the reaction hexadecanoyl-[ACP] + H2O = hexadecanoate + holo-[ACP] + H(+). In terms of biological role, plays an essential role in chain termination during de novo fatty acid synthesis. High thioesterase activity for palmitoyl-ACP versus other acyl-ACPs. The chain is Palmitoyl-acyl carrier protein thioesterase, chloroplastic (FATB1) from Gossypium hirsutum (Upland cotton).